The primary structure comprises 611 residues: UvrABC system protein C (611 aa).

Residues 14–91 (TSPGCYIHKD…IKENQPKYNI (78 aa)) form the GIY-YIG domain. The 36-residue stretch at 196–231 (DQIIEDLRGKMAGAAQAMEFEKAAEYRDLIQSIGTL) folds into the UVR domain. Residues 587–611 (KLNPKTQEQEQAQLREVAEPQIGLE) form a disordered region.

This sequence belongs to the UvrC family. Interacts with UvrB in an incision complex.

Its subcellular location is the cytoplasm. The UvrABC repair system catalyzes the recognition and processing of DNA lesions. UvrC both incises the 5' and 3' sides of the lesion. The N-terminal half is responsible for the 3' incision and the C-terminal half is responsible for the 5' incision. This is UvrABC system protein C from Streptococcus sanguinis (strain SK36).